The sequence spans 1390 residues: DNA-directed RNA polymerase subunit beta'' (1390 aa).

4 residues coordinate Zn(2+): C224, C294, C301, and C304.

Belongs to the RNA polymerase beta' chain family. RpoC2 subfamily. In plastids the minimal PEP RNA polymerase catalytic core is composed of four subunits: alpha, beta, beta', and beta''. When a (nuclear-encoded) sigma factor is associated with the core the holoenzyme is formed, which can initiate transcription. The cofactor is Zn(2+).

The protein localises to the plastid. It is found in the chloroplast. The catalysed reaction is RNA(n) + a ribonucleoside 5'-triphosphate = RNA(n+1) + diphosphate. Functionally, DNA-dependent RNA polymerase catalyzes the transcription of DNA into RNA using the four ribonucleoside triphosphates as substrates. The chain is DNA-directed RNA polymerase subunit beta'' from Ceratophyllum demersum (Rigid hornwort).